A 585-amino-acid polypeptide reads, in one-letter code: Staphyloferrin A synthase (585 aa).

The protein belongs to the IucA/IucC family.

It catalyses the reaction N(5)-[(S)-citryl]-D-ornithine + citrate + ATP = staphyloferrin A + AMP + diphosphate + H(+). The protein operates within siderophore biosynthesis. Its function is as follows. Involved in the biosynthesis of the siderophore staphyloferrin A. Catalyzes the ATP-dependent condensation of a citryl-D-ornithine intermediate, produced by SfnaD, and citrate to form staphyloferrin A. In Staphylococcus aureus (strain NCTC 8325 / PS 47), this protein is Staphyloferrin A synthase.